The primary structure comprises 156 residues: Small ribosomal subunit protein uS7 (156 aa).

Belongs to the universal ribosomal protein uS7 family. Part of the 30S ribosomal subunit. Contacts proteins S9 and S11.

Functionally, one of the primary rRNA binding proteins, it binds directly to 16S rRNA where it nucleates assembly of the head domain of the 30S subunit. Is located at the subunit interface close to the decoding center, probably blocks exit of the E-site tRNA. This Ruegeria pomeroyi (strain ATCC 700808 / DSM 15171 / DSS-3) (Silicibacter pomeroyi) protein is Small ribosomal subunit protein uS7.